Consider the following 589-residue polypeptide: Protein NRT1/ PTR FAMILY 7.2 (589 aa).

Helical transmembrane passes span 32-52 (WLTAILILVNQGLATLAFFGV) and 78-98 (WTGTVYIFSLLGAFLSDSYWG). Thr-102 is subject to Phosphothreonine. 10 helical membrane-spanning segments follow: residues 105 to 125 (IFQASFVAGLMMLSLSTGALL), 147 to 167 (VLFYLSVYLIALGYGGYQPNI), 187 to 207 (IAFFSYFYLALNLGSLFSNTV), 217 to 237 (WPLGFWASAGSAFAGLVLFLI), 343 to 363 (IWLCTILYSVVFTQMASLFVV), 377 to 397 (IPASSMSSFDILSVAFFIFAY), 423 to 443 (MGIGLVIAIMAMISAGIVEIH), 464 to 484 (IFWQVPQYMLIGASEVFMYVG), 504 to 524 (LCMASISLGNYVSSLLVSIVM), and 548 to 568 (FYFLLAGLTAADFVVYLICAK).

The protein belongs to the major facilitator superfamily. Proton-dependent oligopeptide transporter (POT/PTR) (TC 2.A.17) family. Expressed in xylem parenchyma cells within the vasculature. Expressed in siliques and flowers. Higher expression in shoots than in roots.

The protein resides in the cell membrane. Low-affinity nitrate transporter. Involved in nitrate removal from xylem sap. Not involved in oligopeptides transport. The chain is Protein NRT1/ PTR FAMILY 7.2 (NPF7.2) from Arabidopsis thaliana (Mouse-ear cress).